Reading from the N-terminus, the 118-residue chain is Mating-type P-specific polypeptide Pc (118 aa).

Positions 29 to 97 (KTTIYKNGFM…VRKQIAKLER (69 aa)) form a DNA-binding region, HMG box.

The protein resides in the nucleus. Functionally, mating type proteins are sequence specific DNA-binding proteins that act as master switches in yeast differentiation by controlling gene expression in a cell type-specific fashion. Required for conjugation and efficient meiosis. The polypeptide is Mating-type P-specific polypeptide Pc (matPc) (Schizosaccharomyces kambucha (Fission yeast)).